The chain runs to 267 residues: Glutamate racemase (267 aa).

Residues 13–14 (DS) and 45–46 (YS) each bind substrate. The Proton donor/acceptor role is filled by cysteine 77. 78-79 (NT) contacts substrate. Cysteine 188 serves as the catalytic Proton donor/acceptor. 189–190 (TH) is a binding site for substrate.

This sequence belongs to the aspartate/glutamate racemases family.

It carries out the reaction L-glutamate = D-glutamate. It participates in cell wall biogenesis; peptidoglycan biosynthesis. Provides the (R)-glutamate required for cell wall biosynthesis. The protein is Glutamate racemase of Histophilus somni (strain 2336) (Haemophilus somnus).